We begin with the raw amino-acid sequence, 337 residues long: MSDLPFTLDQLRILKAIAVEGSFKRAADSLYVSQPAVSLQVQNLERQLDVPLFDRGGRRAQLTEAGHLLLSYGEKILSLCQETCRAIEDLQNLQGGTLIVGASQTTGTYLLPKMIGMFRQKYPDVAVQLHVHSTRRTAWSVANGQVDLAIIGGEIPGELTESLEIIPYAEDELALILPVFHPFTKLDTIQKEDLYKLQFITLDSQSTIRKVIDQVLSRSEIDTRRFKIEMELNSIEAIKNAVQSGLGAAFVSTSAIAKELQMGVLHCTPIDGVVIKRTLWLIFNPNRYRSKAAEAFSQEILPQFATPDWNQDVLKLAQKKLVVNVLDAAIPNTSDDG.

Residues 6–63 enclose the HTH lysR-type domain; that stretch reads FTLDQLRILKAIAVEGSFKRAADSLYVSQPAVSLQVQNLERQLDVPLFDRGGRRAQLT. A DNA-binding region (H-T-H motif) is located at residues 23 to 42; that stretch reads FKRAADSLYVSQPAVSLQVQ.

It belongs to the LysR transcriptional regulatory family.

In terms of biological role, trans-acting transcriptional regulator of RuBisCO genes (rbcL and rbcS) expression. This is Probable RuBisCO transcriptional regulator (rbcR) from Nostoc sp. (strain PCC 7120 / SAG 25.82 / UTEX 2576).